We begin with the raw amino-acid sequence, 363 residues long: Aminomethyltransferase (363 aa).

It belongs to the GcvT family. The glycine cleavage system is composed of four proteins: P, T, L and H.

It carries out the reaction N(6)-[(R)-S(8)-aminomethyldihydrolipoyl]-L-lysyl-[protein] + (6S)-5,6,7,8-tetrahydrofolate = N(6)-[(R)-dihydrolipoyl]-L-lysyl-[protein] + (6R)-5,10-methylene-5,6,7,8-tetrahydrofolate + NH4(+). In terms of biological role, the glycine cleavage system catalyzes the degradation of glycine. In Staphylococcus aureus (strain bovine RF122 / ET3-1), this protein is Aminomethyltransferase.